Consider the following 321-residue polypeptide: Lipoyl synthase (321 aa).

7 residues coordinate [4Fe-4S] cluster: C68, C73, C79, C94, C98, C101, and S308. The 218-residue stretch at 80-297 folds into the Radical SAM core domain; the sequence is FNHGTATFMI…KAEALAMGFT (218 aa).

The protein belongs to the radical SAM superfamily. Lipoyl synthase family. It depends on [4Fe-4S] cluster as a cofactor.

It is found in the cytoplasm. It carries out the reaction [[Fe-S] cluster scaffold protein carrying a second [4Fe-4S](2+) cluster] + N(6)-octanoyl-L-lysyl-[protein] + 2 oxidized [2Fe-2S]-[ferredoxin] + 2 S-adenosyl-L-methionine + 4 H(+) = [[Fe-S] cluster scaffold protein] + N(6)-[(R)-dihydrolipoyl]-L-lysyl-[protein] + 4 Fe(3+) + 2 hydrogen sulfide + 2 5'-deoxyadenosine + 2 L-methionine + 2 reduced [2Fe-2S]-[ferredoxin]. The protein operates within protein modification; protein lipoylation via endogenous pathway; protein N(6)-(lipoyl)lysine from octanoyl-[acyl-carrier-protein]: step 2/2. Catalyzes the radical-mediated insertion of two sulfur atoms into the C-6 and C-8 positions of the octanoyl moiety bound to the lipoyl domains of lipoate-dependent enzymes, thereby converting the octanoylated domains into lipoylated derivatives. This chain is Lipoyl synthase, found in Salmonella typhi.